The sequence spans 369 residues: Small ribosomal subunit biogenesis GTPase RsgA (369 aa).

One can recognise a CP-type G domain in the interval 116–271 (GEQLIAANLD…LIDNPGIREI (156 aa)). Residues 161–164 (NKID) and 213–221 (GSSGVGKST) each bind GTP. The Zn(2+) site is built by Cys-294, Cys-299, His-301, and Cys-307.

It belongs to the TRAFAC class YlqF/YawG GTPase family. RsgA subfamily. As to quaternary structure, monomer. Associates with 30S ribosomal subunit, binds 16S rRNA. The cofactor is Zn(2+).

The protein localises to the cytoplasm. One of several proteins that assist in the late maturation steps of the functional core of the 30S ribosomal subunit. Helps release RbfA from mature subunits. May play a role in the assembly of ribosomal proteins into the subunit. Circularly permuted GTPase that catalyzes slow GTP hydrolysis, GTPase activity is stimulated by the 30S ribosomal subunit. This Methanosarcina acetivorans (strain ATCC 35395 / DSM 2834 / JCM 12185 / C2A) protein is Small ribosomal subunit biogenesis GTPase RsgA.